We begin with the raw amino-acid sequence, 623 residues long: Chaperone protein HtpG (623 aa).

Residues 1–336 (MSETNTQKAA…TEDLPLNVSR (336 aa)) are a; substrate-binding. The tract at residues 337–546 (EMLQATPVLA…DGGPDLTMQR (210 aa)) is b. The c stretch occupies residues 547-623 (LMRRSGQAMP…ATLLAGPAAE (77 aa)).

It belongs to the heat shock protein 90 family. Homodimer.

The protein resides in the cytoplasm. Functionally, molecular chaperone. Has ATPase activity. In Gluconobacter oxydans (strain 621H) (Gluconobacter suboxydans), this protein is Chaperone protein HtpG.